Here is a 263-residue protein sequence, read N- to C-terminus: 3-methyl-2-oxobutanoate hydroxymethyltransferase (263 aa).

Mg(2+)-binding residues include D45 and D84. 3-methyl-2-oxobutanoate-binding positions include 45–46 (DS), D84, and K112. E114 contacts Mg(2+). The active-site Proton acceptor is the E180.

Belongs to the PanB family. In terms of assembly, homodecamer; pentamer of dimers. It depends on Mg(2+) as a cofactor.

It is found in the cytoplasm. It catalyses the reaction 3-methyl-2-oxobutanoate + (6R)-5,10-methylene-5,6,7,8-tetrahydrofolate + H2O = 2-dehydropantoate + (6S)-5,6,7,8-tetrahydrofolate. It participates in cofactor biosynthesis; (R)-pantothenate biosynthesis; (R)-pantoate from 3-methyl-2-oxobutanoate: step 1/2. Catalyzes the reversible reaction in which hydroxymethyl group from 5,10-methylenetetrahydrofolate is transferred onto alpha-ketoisovalerate to form ketopantoate. The chain is 3-methyl-2-oxobutanoate hydroxymethyltransferase from Enterobacter sp. (strain 638).